The sequence spans 147 residues: Phospholipase A2 inhibitor subunit A (147 aa).

Residues 62-143 (EICRQAGGRI…DDNLLVVCEF (82 aa)) enclose the C-type lectin domain. 2 disulfide bridges follow: Cys-64/Cys-141 and Cys-119/Cys-133. Asn-103 is a glycosylation site (N-linked (GlcNAc...) asparagine).

It belongs to the alpha-type phospholipase A2 inhibitor family. Homotrimer; non-covalently linked. Post-translationally, glycosylated. Expressed by the liver.

The protein resides in the secreted. Its function is as follows. Inhibits the enzymatic activity of the acidic phospholipase A2 (PLA2). The chain is Phospholipase A2 inhibitor subunit A from Gloydius brevicaudus siniticus (Chinese mamushi).